The following is a 620-amino-acid chain: Chaperone protein DnaK (620 aa).

At Thr-197 the chain carries Phosphothreonine; by autocatalysis. The segment at 597-620 (AMANKNNAEQPKKKDDDVIDAEVE) is disordered.

The protein belongs to the heat shock protein 70 family.

Its function is as follows. Acts as a chaperone. The protein is Chaperone protein DnaK of Helicobacter pylori (strain Shi470).